A 211-amino-acid chain; its full sequence is Large ribosomal subunit protein bL25 (211 aa).

It belongs to the bacterial ribosomal protein bL25 family. CTC subfamily. Part of the 50S ribosomal subunit; part of the 5S rRNA/L5/L18/L25 subcomplex. Contacts the 5S rRNA. Binds to the 5S rRNA independently of L5 and L18.

In terms of biological role, this is one of the proteins that binds to the 5S RNA in the ribosome where it forms part of the central protuberance. The polypeptide is Large ribosomal subunit protein bL25 (Anaplasma phagocytophilum (strain HZ)).